The following is a 485-amino-acid chain: Zinc finger SWIM domain-containing protein 1 (485 aa).

The segment at 363-405 (MNIQILEDTHKVQPQPPASCSCYFNQAFHLPCRHILAMLSARR) adopts an SWIM-type zinc-finger fold.

The chain is Zinc finger SWIM domain-containing protein 1 (ZSWIM1) from Homo sapiens (Human).